A 120-amino-acid polypeptide reads, in one-letter code: Large ribosomal subunit protein uL18 (120 aa).

The protein belongs to the universal ribosomal protein uL18 family. In terms of assembly, part of the 50S ribosomal subunit; part of the 5S rRNA/L5/L18/L25 subcomplex. Contacts the 5S and 23S rRNAs.

In terms of biological role, this is one of the proteins that bind and probably mediate the attachment of the 5S RNA into the large ribosomal subunit, where it forms part of the central protuberance. In Hyphomonas neptunium (strain ATCC 15444), this protein is Large ribosomal subunit protein uL18.